The following is a 170-amino-acid chain: uncharacterized protein (170 aa).

A VOC domain is found at 25–151 (PALSPHLVVD…FGHHWSLGQP (127 aa)).

This is an uncharacterized protein from Mycobacterium tuberculosis (strain CDC 1551 / Oshkosh).